We begin with the raw amino-acid sequence, 319 residues long: Beta-ketoacyl-[acyl-carrier-protein] synthase III (319 aa).

Active-site residues include C115 and H246. Positions 247-251 (QANLR) are ACP-binding. The active site involves N276.

Belongs to the thiolase-like superfamily. FabH family. Homodimer.

The protein localises to the cytoplasm. It carries out the reaction malonyl-[ACP] + acetyl-CoA + H(+) = 3-oxobutanoyl-[ACP] + CO2 + CoA. Its pathway is lipid metabolism; fatty acid biosynthesis. Catalyzes the condensation reaction of fatty acid synthesis by the addition to an acyl acceptor of two carbons from malonyl-ACP. Catalyzes the first condensation reaction which initiates fatty acid synthesis and may therefore play a role in governing the total rate of fatty acid production. Possesses both acetoacetyl-ACP synthase and acetyl transacylase activities. Its substrate specificity determines the biosynthesis of branched-chain and/or straight-chain of fatty acids. The chain is Beta-ketoacyl-[acyl-carrier-protein] synthase III from Coxiella burnetii (strain RSA 331 / Henzerling II).